A 310-amino-acid chain; its full sequence is Oxygen-dependent coproporphyrinogen-III oxidase (310 aa).

Position 92 (Ser92) interacts with substrate. Positions 96 and 106 each coordinate a divalent metal cation. Residue His106 is the Proton donor of the active site. Residue 108–110 (NVR) coordinates substrate. Residues His145 and His175 each contribute to the a divalent metal cation site. The important for dimerization stretch occupies residues 240-275 (YVEFNLIWDRGTLFGLQSGGRTESILMSMPPLARWE). 258–260 (GGR) is a binding site for substrate.

Belongs to the aerobic coproporphyrinogen-III oxidase family. Homodimer. A divalent metal cation is required as a cofactor.

Its subcellular location is the cytoplasm. It carries out the reaction coproporphyrinogen III + O2 + 2 H(+) = protoporphyrinogen IX + 2 CO2 + 2 H2O. Its pathway is porphyrin-containing compound metabolism; protoporphyrin-IX biosynthesis; protoporphyrinogen-IX from coproporphyrinogen-III (O2 route): step 1/1. Functionally, involved in the heme biosynthesis. Catalyzes the aerobic oxidative decarboxylation of propionate groups of rings A and B of coproporphyrinogen-III to yield the vinyl groups in protoporphyrinogen-IX. The sequence is that of Oxygen-dependent coproporphyrinogen-III oxidase from Pectobacterium atrosepticum (strain SCRI 1043 / ATCC BAA-672) (Erwinia carotovora subsp. atroseptica).